The sequence spans 427 residues: Probable anaerobic glycerol-3-phosphate dehydrogenase subunit B (427 aa).

The protein belongs to the anaerobic G-3-P dehydrogenase subunit B family. The cofactor is FMN.

The catalysed reaction is a quinone + sn-glycerol 3-phosphate = dihydroxyacetone phosphate + a quinol. The protein operates within polyol metabolism; glycerol degradation via glycerol kinase pathway; glycerone phosphate from sn-glycerol 3-phosphate (anaerobic route): step 1/1. This is Probable anaerobic glycerol-3-phosphate dehydrogenase subunit B from Halobacterium salinarum (strain ATCC 29341 / DSM 671 / R1).